Reading from the N-terminus, the 68-residue chain is Copper transport protein ATOX1 (68 aa).

In terms of domain architecture, HMA spans 1-63 (MPKHEFSVDM…TLGKTGKAVS (63 aa)). Positions 12 and 15 each coordinate Cu cation. Serine 47 carries the phosphoserine modification. Lysine 60 is subject to N6-acetyllysine.

The protein belongs to the ATX1 family. In terms of assembly, homodimer. Interacts with ATP7B. Interacts with ATP7A. Interacts (via dimer form) with SLC31A1 (via C-terminal domain); this interaction improves ATOX1 stability and controls intracellular Cu(I) levels.

Binds and deliver cytosolic copper to the copper ATPase proteins. May be important in cellular antioxidant defense. This chain is Copper transport protein ATOX1, found in Bos taurus (Bovine).